Consider the following 300-residue polypeptide: tRNA-cytidine(32) 2-sulfurtransferase (300 aa).

The PP-loop motif signature appears at 41–46 (SGGKDS). Residues C116, C119, and C207 each contribute to the [4Fe-4S] cluster site.

The protein belongs to the TtcA family. As to quaternary structure, homodimer. It depends on Mg(2+) as a cofactor. [4Fe-4S] cluster serves as cofactor.

Its subcellular location is the cytoplasm. The catalysed reaction is cytidine(32) in tRNA + S-sulfanyl-L-cysteinyl-[cysteine desulfurase] + AH2 + ATP = 2-thiocytidine(32) in tRNA + L-cysteinyl-[cysteine desulfurase] + A + AMP + diphosphate + H(+). The protein operates within tRNA modification. Functionally, catalyzes the ATP-dependent 2-thiolation of cytidine in position 32 of tRNA, to form 2-thiocytidine (s(2)C32). The sulfur atoms are provided by the cysteine/cysteine desulfurase (IscS) system. The protein is tRNA-cytidine(32) 2-sulfurtransferase of Idiomarina loihiensis (strain ATCC BAA-735 / DSM 15497 / L2-TR).